Consider the following 125-residue polypeptide: Small ribosomal subunit protein uS11 (125 aa).

It belongs to the universal ribosomal protein uS11 family. Part of the 30S ribosomal subunit. Interacts with proteins S7 and S18. Binds to IF-3.

Functionally, located on the platform of the 30S subunit, it bridges several disparate RNA helices of the 16S rRNA. Forms part of the Shine-Dalgarno cleft in the 70S ribosome. The polypeptide is Small ribosomal subunit protein uS11 (Coprothermobacter proteolyticus (strain ATCC 35245 / DSM 5265 / OCM 4 / BT)).